Here is a 142-residue protein sequence, read N- to C-terminus: Large ribosomal subunit protein uL13 (142 aa).

This sequence belongs to the universal ribosomal protein uL13 family. As to quaternary structure, part of the 50S ribosomal subunit.

Functionally, this protein is one of the early assembly proteins of the 50S ribosomal subunit, although it is not seen to bind rRNA by itself. It is important during the early stages of 50S assembly. The protein is Large ribosomal subunit protein uL13 of Mannheimia succiniciproducens (strain KCTC 0769BP / MBEL55E).